Reading from the N-terminus, the 599-residue chain is Elongation factor 4 (599 aa).

The 183-residue stretch at 2 to 184 folds into the tr-type G domain; that stretch reads KNIRNFSIIA…RLVRDIPPPE (183 aa). GTP contacts are provided by residues 14–19 and 131–134; these read DHGKST and NKID.

The protein belongs to the TRAFAC class translation factor GTPase superfamily. Classic translation factor GTPase family. LepA subfamily.

Its subcellular location is the cell inner membrane. The catalysed reaction is GTP + H2O = GDP + phosphate + H(+). Its function is as follows. Required for accurate and efficient protein synthesis under certain stress conditions. May act as a fidelity factor of the translation reaction, by catalyzing a one-codon backward translocation of tRNAs on improperly translocated ribosomes. Back-translocation proceeds from a post-translocation (POST) complex to a pre-translocation (PRE) complex, thus giving elongation factor G a second chance to translocate the tRNAs correctly. Binds to ribosomes in a GTP-dependent manner. In Escherichia coli (strain SE11), this protein is Elongation factor 4.